A 36-amino-acid polypeptide reads, in one-letter code: Photosystem I reaction center subunit VIII (36 aa).

Residues 9–29 (ILTPVVTLVFPGLMFALFFVL) traverse the membrane as a helical segment.

It belongs to the PsaI family.

The protein localises to the plastid. The protein resides in the chloroplast thylakoid membrane. Functionally, may help in the organization of the PsaL subunit. The polypeptide is Photosystem I reaction center subunit VIII (Emiliania huxleyi (Coccolithophore)).